The chain runs to 360 residues: Phosphate acyltransferase (360 aa).

This sequence belongs to the PlsX family. As to quaternary structure, homodimer. Probably interacts with PlsY.

It localises to the cytoplasm. It catalyses the reaction a fatty acyl-[ACP] + phosphate = an acyl phosphate + holo-[ACP]. It participates in lipid metabolism; phospholipid metabolism. Functionally, catalyzes the reversible formation of acyl-phosphate (acyl-PO(4)) from acyl-[acyl-carrier-protein] (acyl-ACP). This enzyme utilizes acyl-ACP as fatty acyl donor, but not acyl-CoA. The chain is Phosphate acyltransferase from Thermobifida fusca (strain YX).